The following is a 328-amino-acid chain: Tetraacyldisaccharide 4'-kinase (328 aa).

Residue Thr-55–Thr-62 participates in ATP binding.

The protein belongs to the LpxK family.

It catalyses the reaction a lipid A disaccharide + ATP = a lipid IVA + ADP + H(+). The protein operates within glycolipid biosynthesis; lipid IV(A) biosynthesis; lipid IV(A) from (3R)-3-hydroxytetradecanoyl-[acyl-carrier-protein] and UDP-N-acetyl-alpha-D-glucosamine: step 6/6. Transfers the gamma-phosphate of ATP to the 4'-position of a tetraacyldisaccharide 1-phosphate intermediate (termed DS-1-P) to form tetraacyldisaccharide 1,4'-bis-phosphate (lipid IVA). This Escherichia coli O7:K1 (strain IAI39 / ExPEC) protein is Tetraacyldisaccharide 4'-kinase.